The primary structure comprises 405 residues: Acetate kinase (405 aa).

N7 lines the Mg(2+) pocket. K14 contributes to the ATP binding site. A substrate-binding site is contributed by R99. D156 acts as the Proton donor/acceptor in catalysis. 215 to 219 serves as a coordination point for ATP; it reads HLGNG. E391 is a Mg(2+) binding site.

It belongs to the acetokinase family. In terms of assembly, homodimer. Requires Mg(2+) as cofactor. Mn(2+) is required as a cofactor.

The protein localises to the cytoplasm. It catalyses the reaction acetate + ATP = acetyl phosphate + ADP. The protein operates within metabolic intermediate biosynthesis; acetyl-CoA biosynthesis; acetyl-CoA from acetate: step 1/2. In terms of biological role, catalyzes the formation of acetyl phosphate from acetate and ATP. Can also catalyze the reverse reaction. In Trichormus variabilis (strain ATCC 29413 / PCC 7937) (Anabaena variabilis), this protein is Acetate kinase.